Reading from the N-terminus, the 951-residue chain is Bifunctional glutamine synthetase adenylyltransferase/adenylyl-removing enzyme (951 aa).

Positions 1-440 (MLPLPSELQI…VFDDLIGDET (440 aa)) are adenylyl removase. The interval 449–951 (HGLYKSLWQD…WLAANDANVS (503 aa)) is adenylyl transferase.

Belongs to the GlnE family. Mg(2+) is required as a cofactor.

It catalyses the reaction [glutamine synthetase]-O(4)-(5'-adenylyl)-L-tyrosine + phosphate = [glutamine synthetase]-L-tyrosine + ADP. It carries out the reaction [glutamine synthetase]-L-tyrosine + ATP = [glutamine synthetase]-O(4)-(5'-adenylyl)-L-tyrosine + diphosphate. Functionally, involved in the regulation of glutamine synthetase GlnA, a key enzyme in the process to assimilate ammonia. When cellular nitrogen levels are high, the C-terminal adenylyl transferase (AT) inactivates GlnA by covalent transfer of an adenylyl group from ATP to specific tyrosine residue of GlnA, thus reducing its activity. Conversely, when nitrogen levels are low, the N-terminal adenylyl removase (AR) activates GlnA by removing the adenylyl group by phosphorolysis, increasing its activity. The regulatory region of GlnE binds the signal transduction protein PII (GlnB) which indicates the nitrogen status of the cell. This Yersinia pestis bv. Antiqua (strain Antiqua) protein is Bifunctional glutamine synthetase adenylyltransferase/adenylyl-removing enzyme.